The primary structure comprises 443 residues: EP1-like glycoprotein 4 (443 aa).

The first 22 residues, 1–22 (MEFSTTLALFFTLSIFLVGAQA), serve as a signal peptide directing secretion. A Bulb-type lectin domain is found at 29–159 (QFRVVNEGGY…NGKFVWQSFD (131 aa)). 4 N-linked (GlcNAc...) asparagine glycosylation sites follow: N66, N102, N258, and N269. The WD repeat unit spans residues 254 to 296 (GSQFNVSTFLSRPKHNATLSFLRLESDGNIRVWSYSTLATSTA). The region spanning 356-433 (CDPKTFHYFK…TSLVAYVKAP (78 aa)) is the PAN domain. 2 disulfides stabilise this stretch: C387/C409 and C391/C397. N-linked (GlcNAc...) asparagine glycosylation is present at N434.

Its subcellular location is the secreted. The protein localises to the cell wall. The protein is EP1-like glycoprotein 4 of Arabidopsis thaliana (Mouse-ear cress).